The primary structure comprises 248 residues: 3-deoxy-manno-octulosonate cytidylyltransferase (248 aa).

The protein belongs to the KdsB family.

The protein resides in the cytoplasm. It carries out the reaction 3-deoxy-alpha-D-manno-oct-2-ulosonate + CTP = CMP-3-deoxy-beta-D-manno-octulosonate + diphosphate. It functions in the pathway nucleotide-sugar biosynthesis; CMP-3-deoxy-D-manno-octulosonate biosynthesis; CMP-3-deoxy-D-manno-octulosonate from 3-deoxy-D-manno-octulosonate and CTP: step 1/1. It participates in bacterial outer membrane biogenesis; lipopolysaccharide biosynthesis. In terms of biological role, activates KDO (a required 8-carbon sugar) for incorporation into bacterial lipopolysaccharide in Gram-negative bacteria. The polypeptide is 3-deoxy-manno-octulosonate cytidylyltransferase (Syntrophus aciditrophicus (strain SB)).